The chain runs to 1392 residues: DNA-directed RNA polymerase subunit beta'' (1392 aa).

Zn(2+) is bound by residues cysteine 224, cysteine 295, cysteine 302, and cysteine 305.

It belongs to the RNA polymerase beta' chain family. RpoC2 subfamily. In terms of assembly, in plastids the minimal PEP RNA polymerase catalytic core is composed of four subunits: alpha, beta, beta', and beta''. When a (nuclear-encoded) sigma factor is associated with the core the holoenzyme is formed, which can initiate transcription. Zn(2+) is required as a cofactor.

It is found in the plastid. Its subcellular location is the chloroplast. The enzyme catalyses RNA(n) + a ribonucleoside 5'-triphosphate = RNA(n+1) + diphosphate. Functionally, DNA-dependent RNA polymerase catalyzes the transcription of DNA into RNA using the four ribonucleoside triphosphates as substrates. The protein is DNA-directed RNA polymerase subunit beta'' of Eucalyptus globulus subsp. globulus (Tasmanian blue gum).